The sequence spans 163 residues: Epithelial membrane protein 3 (163 aa).

A helical transmembrane segment spans residues 4–24; sequence LLLVVSALHILILILLFVATL. N-linked (GlcNAc...) asparagine glycans are attached at residues N49 and N56. 3 consecutive transmembrane segments (helical) span residues 66-86, 100-120, and 139-159; these read VQVL…LFMF, TGFC…IYAI, and FALA…YIHL.

Belongs to the PMP-22/EMP/MP20 family.

It localises to the membrane. Its function is as follows. Probably involved in cell proliferation and cell-cell interactions. This is Epithelial membrane protein 3 (EMP3) from Bos taurus (Bovine).